Consider the following 936-residue polypeptide: ABC transporter A family member 5 (936 aa).

The next 7 helical transmembrane spans lie at 34 to 54 (LIVI…LFDT), 340 to 360 (ASLI…PVML), 393 to 413 (FLAI…AIGL), 422 to 442 (SIQF…AFLV), 454 to 474 (VAAY…FQFL), 484 to 501 (WIYI…RGLY), and 527 to 547 (AMEE…IAAY). The 238-residue stretch at 614–851 (IVCDNLKKVY…YGGSYVLTMT (238 aa)) folds into the ABC transporter domain. Residue 652 to 659 (GPNGAGKT) participates in ATP binding.

It belongs to the ABC transporter superfamily. ABCA family. CPR flippase (TC 3.A.1.211) subfamily.

The protein localises to the membrane. The polypeptide is ABC transporter A family member 5 (ABCA5) (Arabidopsis thaliana (Mouse-ear cress)).